Here is a 370-residue protein sequence, read N- to C-terminus: Cobalt-precorrin-5B C(1)-methyltransferase (370 aa).

Belongs to the CbiD family.

It carries out the reaction Co-precorrin-5B + S-adenosyl-L-methionine = Co-precorrin-6A + S-adenosyl-L-homocysteine. The protein operates within cofactor biosynthesis; adenosylcobalamin biosynthesis; cob(II)yrinate a,c-diamide from sirohydrochlorin (anaerobic route): step 6/10. In terms of biological role, catalyzes the methylation of C-1 in cobalt-precorrin-5B to form cobalt-precorrin-6A. The chain is Cobalt-precorrin-5B C(1)-methyltransferase from Pseudomonas syringae pv. syringae (strain B728a).